We begin with the raw amino-acid sequence, 141 residues long: Putative nickel-responsive regulator (141 aa).

4 residues coordinate Ni(2+): H80, H91, H93, and C99.

Belongs to the transcriptional regulatory CopG/NikR family. Ni(2+) serves as cofactor.

Functionally, transcriptional regulator. The sequence is that of Putative nickel-responsive regulator from Methanococcus maripaludis (strain C6 / ATCC BAA-1332).